The sequence spans 286 residues: Shikimate dehydrogenase (NADP(+)) (286 aa).

Shikimate-binding positions include 19 to 21 and threonine 66; that span reads SLS. Residue lysine 70 is the Proton acceptor of the active site. Shikimate is bound by residues asparagine 91 and aspartate 107. Residues 129-133 and leucine 229 each bind NADP(+); that span reads GSGGA. Tyrosine 231 provides a ligand contact to shikimate. An NADP(+)-binding site is contributed by glycine 252.

The protein belongs to the shikimate dehydrogenase family. As to quaternary structure, homodimer.

The enzyme catalyses shikimate + NADP(+) = 3-dehydroshikimate + NADPH + H(+). It functions in the pathway metabolic intermediate biosynthesis; chorismate biosynthesis; chorismate from D-erythrose 4-phosphate and phosphoenolpyruvate: step 4/7. Its function is as follows. Involved in the biosynthesis of the chorismate, which leads to the biosynthesis of aromatic amino acids. Catalyzes the reversible NADPH linked reduction of 3-dehydroshikimate (DHSA) to yield shikimate (SA). The chain is Shikimate dehydrogenase (NADP(+)) from Prochlorococcus marinus (strain MIT 9312).